Here is a 261-residue protein sequence, read N- to C-terminus: Imidazole glycerol phosphate synthase subunit HisF (261 aa).

Active-site residues include aspartate 16 and aspartate 135.

This sequence belongs to the HisA/HisF family. As to quaternary structure, heterodimer of HisH and HisF.

The protein localises to the cytoplasm. The enzyme catalyses 5-[(5-phospho-1-deoxy-D-ribulos-1-ylimino)methylamino]-1-(5-phospho-beta-D-ribosyl)imidazole-4-carboxamide + L-glutamine = D-erythro-1-(imidazol-4-yl)glycerol 3-phosphate + 5-amino-1-(5-phospho-beta-D-ribosyl)imidazole-4-carboxamide + L-glutamate + H(+). Its pathway is amino-acid biosynthesis; L-histidine biosynthesis; L-histidine from 5-phospho-alpha-D-ribose 1-diphosphate: step 5/9. Its function is as follows. IGPS catalyzes the conversion of PRFAR and glutamine to IGP, AICAR and glutamate. The HisF subunit catalyzes the cyclization activity that produces IGP and AICAR from PRFAR using the ammonia provided by the HisH subunit. The polypeptide is Imidazole glycerol phosphate synthase subunit HisF (Mycobacterium marinum (strain ATCC BAA-535 / M)).